A 201-amino-acid chain; its full sequence is 3-isopropylmalate dehydratase small subunit (201 aa).

It belongs to the LeuD family. LeuD type 1 subfamily. In terms of assembly, heterodimer of LeuC and LeuD.

The catalysed reaction is (2R,3S)-3-isopropylmalate = (2S)-2-isopropylmalate. The protein operates within amino-acid biosynthesis; L-leucine biosynthesis; L-leucine from 3-methyl-2-oxobutanoate: step 2/4. Functionally, catalyzes the isomerization between 2-isopropylmalate and 3-isopropylmalate, via the formation of 2-isopropylmaleate. This chain is 3-isopropylmalate dehydratase small subunit, found in Escherichia coli O9:H4 (strain HS).